The following is a 142-amino-acid chain: Organic hydroperoxide resistance protein-like 2 (142 aa).

Belongs to the OsmC/Ohr family.

This Staphylococcus epidermidis (strain ATCC 35984 / DSM 28319 / BCRC 17069 / CCUG 31568 / BM 3577 / RP62A) protein is Organic hydroperoxide resistance protein-like 2.